Reading from the N-terminus, the 616-residue chain is Chaperone protein HscA (616 aa).

The protein belongs to the heat shock protein 70 family.

Chaperone involved in the maturation of iron-sulfur cluster-containing proteins. Has a low intrinsic ATPase activity which is markedly stimulated by HscB. Involved in the maturation of IscU. This chain is Chaperone protein HscA, found in Yersinia enterocolitica serotype O:8 / biotype 1B (strain NCTC 13174 / 8081).